The following is a 112-amino-acid chain: Nitrogen regulatory protein P-II (112 aa).

Phosphoserine is present on Ser-49. An O-UMP-tyrosine modification is found at Tyr-51.

Belongs to the P(II) protein family. In terms of assembly, homotrimer. Post-translationally, phosphorylation dependent on the nitrogen source and spectral light quality.

Functionally, P-II indirectly controls the transcription of the GS gene (glnA). P-II prevents NR-II-catalyzed conversion of NR-I to NR-I-phosphate, the transcriptional activator of glnA. When P-II is phosphorylated, these events are reversed. In nitrogen-limiting conditions, when the ratio of Gln to 2-ketoglutarate decreases, P-II is phosphorylated which allows the deadenylation of glutamine synthetase (GS), thus activating the enzyme. In Synechococcus elongatus (strain ATCC 33912 / PCC 7942 / FACHB-805) (Anacystis nidulans R2), this protein is Nitrogen regulatory protein P-II (glnB).